The following is a 125-amino-acid chain: Aldolase FrzH (125 aa).

It catalyses the reaction (2S)-3-(4-methoxyphenyl)-2-[(3S)-3-(methylamino)-8-oxo-1-azaspiro[4.5]decan-1-yl]propanal = (1S,3S,6S,7S,8R)-7-hydroxy-6-[(4-methoxyphenyl)methyl]-3-(methylamino)-5-azatricyclo[6.3.1.0(1,5)]dodecan-9-one. The protein operates within secondary metabolite biosynthesis. In terms of biological role, aldolase; part of the gene cluster that mediates the biosynthesis of the alkaloid (-)-FR901483, a potent immunosuppressant that shows efficacy in animal models and a probable inhibitor of purine nucleotide biosynthesis by targeting phosphoribosylpyrophosphate amidotransferase (PPAT). Within the pathway, FrzH is a new kind of aldolase with no similarities to known aldolases, and which catalyzes the intramolecular aldol condensation via formation of a C9-C3' bond to yield an aza-tricyclic product. The biosynthesis of (-)-FR901483 starts with the condensation of two L-tyrosines to yield (S,S)-dityrosyl-piperazine. This process occurs in 3 steps with the non-canonical nonribosomal peptide synthetase FrzA catalyzing the reduction of L-tyrosine into L-tyrosinal, the spontaneous condensation of 2 L-tyrosinal units, and the subsequent reduction by the NmrA-like family domain-containing oxidoreductase FrzB. The cytochrome P450 monooxygenase FrzC then performs coupling between N10 and C1' to morph the piperazine into a 1,4-diazabicyclo[3.2.1]octane spiro-fused to a 2,5-cyclohexadienone. The dienone portion is further reduced to cyclohexanone by the flavin-dependent reductase FrzD. The methyltranserases (MTs) FrzE and FrzF are then involved in the methylation at the C10' amine and the C4 phenolic oxygen, respectively. The order of the two MTs appear to be interchangeable. Cleavage of the C9-N10' bond by the dioxygenase FrzG then leads to formation of a conjugated iminium. In addition to the oxidation of C9, an additional dehydrogenation between C7 and C8 can occur to give a likely shunt product. The next biosynthetic step is the intramolecular aldol condensation catalyzed by the newly identified aldolase FrzH to yield an aza-tricyclic product with the formation of a C9-C3' bond. The short-chain dehydrogenase/reductase FrzI then produces dephospho-(-)-FR901483 that is phosphorylated at C4'-OH into (-)-FR901483 by the phosphotransferase FrzJ. This chain is Aldolase FrzH, found in Cladobotryum sp.